A 917-amino-acid chain; its full sequence is Major intrinsically disordered Notch2-binding receptor 1 (917 aa).

At 1-892 (MEANQEASLF…AEFRRAKVCK (892 aa)) the chain is on the cytoplasmic side. Disordered regions lie at residues 337 to 367 (STYF…WPAK), 389 to 410 (SEEK…GPDR), 457 to 476 (DKSI…SVGT), 568 to 588 (ITNG…NVHH), 652 to 679 (SEAP…LENS), 706 to 727 (TRPS…IASI), and 746 to 783 (NEEE…LPKQ). The span at 460–476 (ISCTSGQHSSDTSSVGT) shows a compositional bias: polar residues. The segment covering 576–588 (KGDKCNRPENVHH) has biased composition (basic and acidic residues). Serine 712 carries the post-translational modification Phosphoserine. The chain crosses the membrane as a helical span at residues 893-913 (IAALITAAACTVILVIVVPIC). Residues 914–917 (TMKS) are Extracellular-facing.

Belongs to the MINAR family. Interacts with NOTCH2; this interaction increases MINAR1 stability. Interacts (via N-terminus) with DEPTOR (via PDZ domain); this interaction may stabilize DEPTOR protein by impairing its ubiquitination.

It localises to the cell membrane. In terms of biological role, intrinsically disordered protein which may negatively regulate mTOR signaling pathway by stabilizing the mTOR complex component DEPTOR. Negatively regulates angiogenesis. Negatively regulates cell growth. Negatively regulates neurite outgrowth in hippocampal neurons. The protein is Major intrinsically disordered Notch2-binding receptor 1 (Minar1) of Rattus norvegicus (Rat).